A 204-amino-acid polypeptide reads, in one-letter code: N-(5'-phosphoribosyl)anthranilate isomerase (204 aa).

The protein belongs to the TrpF family.

It catalyses the reaction N-(5-phospho-beta-D-ribosyl)anthranilate = 1-(2-carboxyphenylamino)-1-deoxy-D-ribulose 5-phosphate. It participates in amino-acid biosynthesis; L-tryptophan biosynthesis; L-tryptophan from chorismate: step 3/5. This chain is N-(5'-phosphoribosyl)anthranilate isomerase, found in Bacillus cereus (strain Q1).